Consider the following 204-residue polypeptide: MSDLRITEAFLYMDYLCFRALCCKGPPPARPEYDLVCIGLTGSGKTSLLSELCSESPENVVSTTGFSIKAVPFQNAVLNVKELGGADNIRKYWSRYYQGSQGVIFVLDSASSEDDLETARNELHSALQHPQLCTLPFLILANHQDKPAARSVQEIKKYFELEPLARGKRWILQPCSLDDVDTLKDSFSQLINLLEEKDHEAVRM.

GTP-binding positions include 39–46, 82–86, and 142–145; these read GLTGSGKT, ELGGA, and NHQD.

Belongs to the small GTPase superfamily. Arf family.

The polypeptide is ADP-ribosylation factor-like protein 15 (Arl15) (Mus musculus (Mouse)).